The sequence spans 351 residues: sn-glycerol-3-phosphate import ATP-binding protein UgpC (351 aa).

The region spanning Ile-4 to Ile-234 is the ABC transporter domain. An ATP-binding site is contributed by Gly-36–Ser-43.

Belongs to the ABC transporter superfamily. sn-glycerol-3-phosphate importer (TC 3.A.1.1.3) family. In terms of assembly, the complex is composed of two ATP-binding proteins (UgpC), two transmembrane proteins (UgpA and UgpE) and a solute-binding protein (UgpB).

It is found in the cell inner membrane. It catalyses the reaction sn-glycerol 3-phosphate(out) + ATP + H2O = sn-glycerol 3-phosphate(in) + ADP + phosphate + H(+). Part of the ABC transporter complex UgpBAEC involved in sn-glycerol-3-phosphate (G3P) import. Responsible for energy coupling to the transport system. The chain is sn-glycerol-3-phosphate import ATP-binding protein UgpC from Ruegeria sp. (strain TM1040) (Silicibacter sp.).